The sequence spans 399 residues: Lymphoid enhancer-binding factor 1 (399 aa).

Gly residues predominate over residues 1–14 (MPQLSGGGGGGGGD). The segment at 1 to 62 (MPQLSGGGGG…IKSSLVNESE (62 aa)) is CTNNB1-binding. The disordered stretch occupies residues 1-104 (MPQLSGGGGG…KHPDGGLYNK (104 aa)). Basic and acidic residues-rich tracts occupy residues 24 to 45 (IPFKDEGDPQKEKIFAEISHPE) and 82 to 98 (PYHDKAREHPDDGKHPD). Residue lysine 27 forms a Glycyl lysine isopeptide (Lys-Gly) (interchain with G-Cter in SUMO) linkage. At serine 132 the chain carries Phosphoserine. The residue at position 155 (threonine 155) is a Phosphothreonine; by NLK. At serine 166 the chain carries Phosphoserine; by NLK. Disordered regions lie at residues 166–192 (SPGSHPSHIPSDVNSKQGMSRHPPAPD) and 268–298 (VKQEHPHTDSDLMHVKPQHEQRKEQEPKRPH). Lysine 269 is covalently cross-linked (Glycyl lysine isopeptide (Lys-Gly) (interchain with G-Cter in SUMO)). A compositionally biased stretch (basic and acidic residues) spans 269-296 (KQEHPHTDSDLMHVKPQHEQRKEQEPKR). Positions 299-367 (IKKPLNAFML…LHMQLYPGWS (69 aa)) form a DNA-binding region, HMG box. The tract at residues 369–399 (RDNYGKKKKRKREKLQESASGTGPRMTAAYI) is disordered.

It belongs to the TCF/LEF family. Binds the armadillo repeat of CTNNB1 and forms a stable complex. Interacts with EP300, TLE1 and PIASG. Binds ALYREF/THOC4, MDFI and MDFIC. Interacts with NLK. Interacts with DAZAP2. Phosphorylated at Thr-155 and/or Ser-166 by NLK. Phosphorylation by NLK at these sites represses LEF1-mediated transcriptional activation of target genes of the canonical Wnt signaling pathway. As to expression, detected in thymus. Not detected in normal colon, but highly expressed in colon cancer biopsies and colon cancer cell lines. Expressed in several pancreatic tumors and weakly expressed in normal pancreatic tissue. Isoforms 1 and 5 are detected in several pancreatic cell lines.

Its subcellular location is the nucleus. Its function is as follows. Transcription factor that binds DNA in a sequence-specific manner. Participates in the Wnt signaling pathway. Activates transcription of target genes in the presence of CTNNB1 and EP300. PIAG antagonizes both Wnt-dependent and Wnt-independent activation by LEF1. TLE1, TLE2, TLE3 and TLE4 repress transactivation mediated by LEF1 and CTNNB1. Regulates T-cell receptor alpha enhancer function. Required for IL17A expressing gamma-delta T-cell maturation and development, via binding to regulator loci of BLK to modulate expression. Acts as a positive regulator of odontoblast differentiation during mesenchymal tooth germ formation, expression is repressed during the bell stage by MSX1-mediated inhibition of CTNNB1 signaling. May play a role in hair cell differentiation and follicle morphogenesis. In terms of biological role, transcriptionally activates MYC and CCND1 expression and enhances proliferation of pancreatic tumor cells. Lacks the CTNNB1 interaction domain and may therefore be an antagonist for Wnt signaling. Functionally, transcriptionally activates the fibronectin promoter, binds to and represses transcription from the E-cadherin promoter in a CTNNB1-independent manner, and is involved in reducing cellular aggregation and increasing cell migration of pancreatic cancer cells. The protein is Lymphoid enhancer-binding factor 1 of Homo sapiens (Human).